A 778-amino-acid polypeptide reads, in one-letter code: Kin of IRRE-like protein 3 (778 aa).

Positions 1 to 21 (MRPFQLDLLFLCFFLFSQELG) are cleaved as a signal peptide. Topologically, residues 22 to 535 (LQKRGCCLVL…GLEAESVPMA (514 aa)) are extracellular. 5 Ig-like C2-type domains span residues 48 to 142 (YSFS…ARLT), 147 to 243 (PDDP…TSVT), 249 to 330 (PPLV…RTVD), 335 to 415 (PRMT…VTLT), and 419 to 515 (PPII…IRLK). A disulfide bond links cysteine 69 and cysteine 127. N-linked (GlcNAc...) asparagine glycosylation is present at asparagine 167. Cysteine 170 and cysteine 227 form a disulfide bridge. The N-linked (GlcNAc...) asparagine glycan is linked to asparagine 253. A disulfide bond links cysteine 271 and cysteine 314. N-linked (GlcNAc...) asparagine glycosylation occurs at asparagine 324. 2 cysteine pairs are disulfide-bonded: cysteine 356–cysteine 398 and cysteine 440–cysteine 499. An N-linked (GlcNAc...) asparagine glycan is attached at asparagine 498. The helical transmembrane segment at 536 to 556 (VIIGVAVGAGVAFLVLMATIV) threads the bilayer. The Cytoplasmic portion of the chain corresponds to 557–778 (AFCCARSQRN…PLQRRMQTHV (222 aa)). The span at 727–736 (CDSSVSSSGK) shows a compositional bias: polar residues. The interval 727–778 (CDSSVSSSGKQDGYVQFDKASKASASSSHHSQSSSQNSDPSRPLQRRMQTHV) is disordered. Residues 748 to 762 (KASASSSHHSQSSSQ) show a composition bias toward low complexity.

This sequence belongs to the immunoglobulin superfamily. As to quaternary structure, homodimer; mediates homophilic interactions to promote cell adhesion. Interacts with NPHS1; forms heterodimers with NPHS1. Interacts with NPHS2/podocin (via the C-terminus). Interacts with CASK. Interacts (via extracellular region) with MAP1B. Interacts (via extracellular region) with MYO16. Interacts (via intracellular region) with ATP1B1. Interacts (via intracellular region) with SHMT2. Interacts (via intracellular region) with UFC1. In terms of processing, undergoes proteolysis by a metalloprotease and gives rise to a soluble form. Expressed mainly in adult brain, bone marrow and stromal cells. Expressed in diverse regions of the brain, including the cortex, hippocampus, striatum, olfactory bulb and cerebellum. In brain, expressed in pontine nucleus neurons (at protein level). In hippocampus, produced in both the dentate granule neurons and the GABAergic neurons, but not the CA3 neurons. Expressed in subpopulations of vomeronasal sensory neurons. Expressed in a subset of neurons in dorsal root ganglia.

It localises to the cell membrane. Its subcellular location is the cell projection. The protein resides in the axon. The protein localises to the dendrite. It is found in the secreted. In terms of biological role, synaptic adhesion molecule required for the formation of target-specific synapses. Required for formation of target-specific synapses at hippocampal mossy fiber synapses. Required for formation of mossy fiber filopodia, the synaptic structures connecting dentate granule and GABA neurons. Probably acts as a homophilic adhesion molecule that promotes trans-cellular interactions and stabilize mossy fiber filipodia contact and subsequent synapse formation. Required for the coalescence of vomeronasal sensory neuron axons. May be involved in the hematopoietic supportive capacity of stroma cells; the secreted extracellular domain is directly responsible for supporting hematopoietic stem cells. The protein is Kin of IRRE-like protein 3 (Kirrel3) of Mus musculus (Mouse).